Consider the following 169-residue polypeptide: MAQGDDNKQAIGQIIRQEQALIFPSLNENDAFSLGQRIRDIAVKDKLGIAIDISLWDRRLFFAATAGATADNTEWLRRKFNVVRRFHVSTYRLVLEQNREDRMFAPYKALDVADYALAGGGFPIRVSGAGVIGAVIVSGLPQREDHNLVVRAVAEHVGQDPVALALPAA.

Belongs to the UPF0303 family.

This is UPF0303 protein BCAN_A1444 from Brucella canis (strain ATCC 23365 / NCTC 10854 / RM-666).